The primary structure comprises 187 residues: ESPLPKPVLDTNGKELNPNSSYRIISIGAGALGGDVYLGKSPNSDAPCPDGVFRYNSDVGPSGTPVRFIPLSGGIFEDQLLNIQFNIPTVKLCVSYTIWKVGNLNAYFRTMLLETGGTIGQADNSYFKIVKLSNFGYNLLSCPFTSIICLRCPEDQFCAKVGVVIQNGKRRLALVNENPLDVLFQEV.

An N-linked (GlcNAc...) asparagine glycan is attached at asparagine 19. Cystine bridges form between cysteine 48–cysteine 93 and cysteine 142–cysteine 158.

Belongs to the protease inhibitor I3 (leguminous Kunitz-type inhibitor) family. Glycosylated. Tubers.

It localises to the vacuole. Functionally, inhibitor of cathepsin D (aspartic protease) and trypsin (serine protease). May protect the plant by inhibiting proteases of invading organisms. The sequence is that of Aspartic protease inhibitor 9 from Solanum tuberosum (Potato).